A 50-amino-acid chain; its full sequence is Large ribosomal subunit protein bL33B (50 aa).

It belongs to the bacterial ribosomal protein bL33 family.

The polypeptide is Large ribosomal subunit protein bL33B (Mesomycoplasma hyopneumoniae (strain 7448) (Mycoplasma hyopneumoniae)).